Consider the following 216-residue polypeptide: 2,5-diamino-6-ribosylamino-4(3H)-pyrimidinone 5'-phosphate reductase (216 aa).

NADP(+)-binding positions include threonine 51, aspartate 55, 79–82 (SMAR), valine 126, and 148–151 (GSTL).

The protein belongs to the HTP reductase family. Homodimer.

It catalyses the reaction 2,5-diamino-6-(1-D-ribitylamino)pyrimidin-4(3H)-one 5'-phosphate + NADP(+) = 2,5-diamino-6-(1-D-ribosylamino)pyrimidin-4(3H)-one 5'-phosphate + NADPH + H(+). The enzyme catalyses 2,5-diamino-6-(1-D-ribitylamino)pyrimidin-4(3H)-one 5'-phosphate + NAD(+) = 2,5-diamino-6-(1-D-ribosylamino)pyrimidin-4(3H)-one 5'-phosphate + NADH + H(+). It functions in the pathway cofactor biosynthesis; riboflavin biosynthesis. Its function is as follows. Catalyzes an early step in riboflavin biosynthesis, the NADPH-dependent reduction of the ribose side chain of 2,5-diamino-6-ribosylamino-4(3H)-pyrimidinone 5'-phosphate, yielding 2,5-diamino-6-ribitylamino-4(3H)-pyrimidinone 5'-phosphate. This Methanothermobacter thermautotrophicus (strain ATCC 29096 / DSM 1053 / JCM 10044 / NBRC 100330 / Delta H) (Methanobacterium thermoautotrophicum) protein is 2,5-diamino-6-ribosylamino-4(3H)-pyrimidinone 5'-phosphate reductase.